A 7182-amino-acid chain; its full sequence is MIKTSKYGLGFKWAPEFRWLLPDAAEELASPMKSDEGGLCPSTGQAMESVGFVYDNHVKIDCRCILGQEWHVQSNLIRDIFVHEDLHVVEVLTKTAVKSGTAILIKSPLHSLGGFPKGYVMGLFRSYKTKRYVVHHLSMTTSTTNFGEDFLGWIVPFGFMPSYVHKWFQFCRLYIEESDLIISNFKFDDYDFSVEDAYAEVHAEPKGKYSQKAYALLRQYRGIKPVLFVDQYGCDYSGKLADCLQAYGHYSLQDMRQKQSVWLANCDFDIVVAWHVVRDSRFVMRLQTIATICGIKYVAQPTEDVVDGDVVIREPVHLLSADAIVLKLPSLMKVMTHMDDFSIKSIYNVDLCDCGFVMQYGYVDCFNDNCDFYGWVSGNMMDGFSCPLCCTVYDSSEVKAQSSGVIPENPVLFTNSTDTVNHDSFNLYGYSVTPFGSCIYWSPRPGLWIPIIKSSVKSYDDLVYSGVVGCKSIVKETALITHALYLDYVQCKCGNLEQNHILGVNNSWCRQLLLNRGDYNMLLKNIDLFVKRRADFACKFAVCGDGFVPFLLDGLIPRSYYLIQSGIFFTSLMSQFSQEVSDMCLKMCILFMDRVSVATFYIEHYVNRLVTQFKLLGTTLVNKMVNWFNTMLDASAPATGWLLYQLLNGLFVVSQANFNFVALIPDYAKILVNKFYTFFKLLLECVTVDVLKDMPVLKTINGLVCIVGNKFYNVSTGLIPGFVLPCNAQEQQIYFFEGVAESVIVEDDVIENVKSSLSSYEYCQPPKSVEKICIIDNMYMGKCGDKFFPIVMNDKNICLLDQAWRFPCAGRKVNFNEKPVVMEIPSLMTVKVMFDLDSTFDDILGKVCSEFEVEKGVTVDDFVAVVCDAIENALNSCKEHPVVGYQVRAFLNKLNENVVYLFDEAGDEAMASRMYCTFAIEDVEDVISSEAVEDTIDGVVEDTINDDEDVVTGDNDDEDVVTGDNDDEDVVTGDNDDEDVVTGDNDDEDVVTGDNDDEDVVTGDNDDEDVVTGDNDDEDVVTGDNDDEDVVTGDNDDEDVVTGDNDDEDVVTGDNDDEDVVTGDNDDEDVVTGDNDDEDVVTGDNNDEEIVTGDNDDQIVVTGDDVDDIESIYDFDTYKALLVFNDVYNDALFVSYGSSVETETYFKVNGLWSPTITHTNCWLRSVLLVMQKLPFKFKDLAIENMWLSYKVGYNQSFVDYLLTTIPKAIVLPQGGFVADFAYWFLNQFDINAYANWCCLKCGFSFDLNGLDALFFYGDIVSHVCKCGHNMTLIAADLPCTLHFSLFDDNFCAFCTPKKIFIAACAVDVNVCHSVAVIGDEQIDGKFVTKFSGDKFDFIVGYGMSFSMSSFELPQLYGLCITPNVCFVKGDIINVARLVKADVIVNPANGHMLHGGGVAKAIAVAAGKKFSKETAAMVKSKGVCQVGDCYVSTGGKLCKTILNIVGPDARQDGRQSYVLLARAYKHLNNYDCCLSTLISAGIFSVPADVSLTYLLGVVDKQVILVSNNKEDFDIIQKCQITSVVGTKALAVRLTANVGRVIKFETDAYKLFLSGDDCFVSNSSVIQEVLLLRHDIQLNNDVRDYLLSKMTSLPKDWRLINKFDVINGVKTVKYFECPNSIYICSQGKDFGYVCDGSFYKATVNQVCVLLAKKIDVLLTVDGVNFKSISLTVGEVFGKILGNVFCDGIDVTKLKCSDFYADKILYQYENLSLADISAVQSSFGFDQQQLLAYYNFLTVCKWSVVVNGPFFSFEQSHNNCYVNVACLMLQHINLKFNKWQWQEAWYEFRAGRPHRLVALVLAKGHFKFDEPSDATDFIRVVLKQADLSGAICELELICDCGIKQESRVGVDAVMHFGTLAKTDLFNGYKIGCNCAGRIVHCTKLNVPFLICSNTPLSKDLPDDVVAANMFMGVGVGHYTHLKCGSPYQHYDACSVKKYTGVSGCLTDCLYLKNLTQTFTSMLTNYFLDDVEMVAYNPDLSQYYCDNGKYYTKPIIKAQFKPFAKVDGVYTNFKLVGHDICAQLNDKLGFNVDLPFVEYKVTVWPVATGDVVLASDDLYVKRYFKGCETFGKPVIWFCHDEASLNSLTYFNKPSFKSENRYSVLSVDSVSEESQGNVVTSVMESQISTKEVKLKGVRKTVKIEDAIIVNDENSSIKVVKSLSLVDVWDMYLTGCDYVVWVANELSRLVKSPTVREYIRYGIKPITIPIDLLCLRDDNQTLLVPKIFKARAIEFYGFLKWLFIYVFSLLHFTNDKTIFYTTEIASKFTFNLFCLALKNAFQTFRWSIFIKGFLVVATVFLFWFNFLYINVIFSDFYLPNISVFPIFVGRIVMWIKATFGLVTICDFYSKLGVGFTSHFCNGSFICELCHSGFDMLDTYAAIDFVQYEVDRRVLFDYVSLVKLIVELVIGYSLYTVWFYPLFCLIGLQLFTTWLPDLFMLETMHWLIRFIVFVANMLPAFVLLRFYIVVTAMYKVVGFIRHIVYGCNKAGCLFCYKRNCSVRVKCSTIVGGVIRYYDITANGGTGFCVKHQWNCFNCHSFKPGNTFITVEAAIELSKELKRPVNPTDASHYVVTDIKQVGCMMRLFYDRDGQRVYDDVDASLFVDINNLLHSKVKVVPNLYVVVVESDADRANFLNAVVFYAQSLYRPILLVDKKLITTACNGISVTQTMFDVYVDTFMSHFDVDRKSFNNFVNIAHASLREGVQLEKVLDTFVGCVRKCCSIDSDVETRFITKSMISAVAAGLEFTDENYNNLVPTYLKSDNIVAADLGVLIQNGAKHVQGNVAKAANISCIWFIDAFNQLTADLQHKLKKACVKTGLKLKLTFNKQEASVPILTTPFSLKGGVVLSNLLYILFFVSLICFILLWALLPTYSVYKSDIHLPAYASFKVIDNGVVRDISVNDLCFANKFFQFDQWYESTFGSVYYHNSMDCPIVVAVMDEDIGSTMFNVPTKVLRHGFHVLHFLTYAFASDSVQCYTPHIQISYNDFYASGCVLSSLCTMFKRGDGTPHPYCYSDGVMKNASLYTSLVPHTRYSLANSNGFIRFPDVISEGIVRIVRTRSMTYCRVGACEYAEEGICFNFNSSWVLNNDYYRSMPGTFCGRDLFDLFYQFFSSLIRPIDFFSLTASSIFGAILAIVVVLVFYYLIKLKRAFGDYTSVVVINVVVWCINFLMLFVFQVYPICACVYACFYFYVTLYFPSEISVIMHLQWIVMYGAIMPFWFCVTYVAMVIANHVLWLFSYCRKIGVNVCSDSTFEETSLTTFMITKDSYCRLKNSVSDVAYNRYLSLYNKYRYYSGKMDTAAYREAACSQLAKAMETFNHNNGNDVLYQPPTASVSTSFLQSGIVKMVSPTSKIEPCIVSVTYGSMTLNGLWLDDKVYCPRHVICSSSNMNEPDYSALLCRVTLGDFTIMSGRMSLTVVSYQMQGCQLVLTVSLQNPYTPKYTFGNVKPGETFTVLAAYNGRPQGAFHVTMRSSYTIKGSFLCGSCGSVGYVLTGDSVKFVYMHQLELSTGCHTGTDFTGNFYGPYRDAQVVQLPVKDYVQTVNVIAWLYAAILNNCAWFVQNDVCSTEDFNVWAMANGFSQVKADLVLDALASMTGVSIETLLAAIKRLYMGFQGRQILGSCTFEDELAPSDVYQQLAGVKLQSKTKRFIKETIYWILISTFLFSCIISAFVKWTIFMYINTHMIGVTLCVLCFVSFMMLLVKHKHFYLTMYIIPVLCTLFYVNYLVVYKEGFRGFTYVWLSYFVPAVNFTYVYEVFYGCILCVFAIFITMHSINHDIFSLMFLVGRIVTLISMWYFGSNLEEDVLLFITAFLGTYTWTTILSLAIAKIVANWLSVNIFYFTDVPYIKLILLSYLFIGYILSCYWGFFSLLNSVFRMPMGVYNYKISVQELRYMNANGLRPPRNSFEAILLNLKLLGIGGVPVIEVSQIQSKLTDVKCANVVLLNCLQHLHVASNSKLWQYCSVLHNEILSTSDLSVAFDKLAQLLIVLFANPAAVDTKCLASIDEVSDDYVQDSTVLQALQSEFVNMASFVEYEVAKKNLADAKNSGSVNQQQIKQLEKACNIAKSVYERDKAVARKLERMADLALTNMYKEARINDKKSKVVSALQTMLFSMVRKLDNQALNSILDNAVKGCVPLSAIPALAANTLTIVIPDKQVFDKVVDNVYVTYAGSVWHIQTVQDADGINKQLTDISVDSNWPLVIIANRYNEVANAVMQNNELMPHKLKIQVVNSGSDMNCNIPTQCYYNNGSSGRIVYAVLSDVDGLKYTKIMKDDGNCVVLELDPPCKFSIQDVKGLKIKYLYFIKGCNTLARGWVVGTLSSTIRLQAGVATEYAANSSILSLCAFSVDPKKTYLDYIQQGGVPIINCVKMLCDHAGTGMAITIKPEATINQDSYGGASVCIYCRARVEHPDVDGICKLRGKFVQVPLGIKDPILYVLTHDVCQVCGFWRDGSCSCVGSSVAVQSKDLNFLNRVRGTSVNARLVPCASGLSTDVQLRAFDICNTNRAGIGLYYKVNCCRFQRIDDDGNKLDKFFVVKRTNLEVYNKEKTYYELTKSCGVVAEHDFFTFDIDGSRVPHIVRRNLSKYTMLDLCYALRHFDRNDCSILCEILCEYADCKESYFSKKDWYDFVENPDIINIYKKLGPIFNRALLNTVIFADTLVEVGLVGVLTLDNQDLYGQWYDFGDFIQTAPGFGVAVADSYYSYMMPMLTMCHVLDCELFVNDSYRQFDLVQYDFTDYKLELFNKYFKYWGMKYHPNTVDCDNDRCIIHCANFNILFSMVLPNTCFGPLVRQIFVDGVPFVVSIGYHYKELGVVMNLDVDTHRYRLSLKDLLLYAADPAMHVASASALLDLRTCCFSVAAITSGIKFQTVKPGNFNQDFYEFVKSKGLFKEGSTVDLKHFFFTQDGNAAITDYNYYKYNLPTMVDIKQLLFVLEVVYKYFEIYDGGCIPASQVIVNNYDKSAGYPFNKFGKARLYYEALSFEEQNEIYAYTKRNVLPTLTQMNLKYAISAKNRARTVAGVSILSTMTGRMFHQKCLKSIAATRGVPVVIGTTKFYGGWDDMLRHLIKDVDNPVLMGWDYPKCDRAMPNILRIVSSLVLARKHEFCCSHGDRFYRLANECAQVLSEIVMCGGCYYVKPGGTSSGDATTAFANSVFNICQAVTANVCSLMACNGHKIEDLSIRNLQKRLYSNVYRTDYVDYTFVNEYYEFLCKHFSMMILSDDGVVCYNSDYASKGYIANISVFQQVLYYQNNVFMSESKCWVENDITNGPHEFCSQHTMLVKIDGDYVYLPYPDPSRILGAGCFVDDLLKTDSVLLIERFVSLAIDAYPLVHHENEEYQKVFRVYLEYIKKLYNDLGTQILDSYSVILSTCDGLKFTEESFYKNMYLKSAVMQSVGACVVCSSQTSLRCGSCIRKPLLCCKCCYDHVMATNHKYVLSVSPYVCNAPNCDVSDVTKLYLGGMSYYCENHKPHYSFKLVMNGMVFGLYKQSCTGSPYIDDFNKIASCKWTEVDDYVLANECIERLKLFAAETQKATEEAFKQSYASATIQEIVSDREVILCWETGKVKPPLNKNYVFTGYHFTSTGKTVLGEYVFDKSELTNGVYYRATTTYKLSIGDVFVLTSHSVASLSAPTLVPQENYASIRFSSVYSVPLVFQNNVANYQHIGMKRYCTVQGPPGTGKSHLAIGLAVYYYTARVVYTAASHAAVDALCEKAYKFLNINDCTRIIPAKVRVDCYDKFKINDTTCKYVFTTINALPELVTDIVVVDEVSMLTNYELSVINARIKAKHYVYIGDPAQLPAPRVLLSKGSLEPRHFNSITKIMCCLGPDIFLGNCYRCPKEIVETVSALVYDNKLKAKNDNSSLCFKVYFKGQTTHESSSAVNIQQIYLISKFLKANPVWNSAVFISPYNSQNYVAKRVLGVQTQTVDSAQGSEYDYVIYSQTAETAHSVNVNRFNVAITRAKKGIFCVMSNMQLFESLNFITLPLDKIQNQTLPRLHCTTNLFKDCSKSCLGYHPAHAPSFLAVDDKYKVNENLAVNLNICEPVLTYSRLISLMGFKLDLTLDGYSKLFITKDEAIKRVRGWVGFDVEGAHATRENIGTNFPLQIGFSTGVDFVVEATGLFAERDCYTFKKTVAKAPPGEKFKHLIPLMSKGQKWDIVRIRIVQMLSDYLLDLSDSVVFITWSASFELTCLRYFAKLGRELNCNVCSNRATCYNSRTGYYGCWRHSYTCDYVYNPLIVDIQQWGYTGSLTSNHDIICNVHKGAHVASADAIMTRCLAIYDCFCKSVNWNLEYPIISNEVSINTSCRLLQRVMLKAAMLCNRYNLCYDIGNPKGLACVKDYEFKFYDAFPVAKSVKQLFYVYDVHKDNFKDGLCMFWNCNVDKYPSNSIVCRFDTRVLNKLNLPGCNGGSLYVNKHAFHTNPFTRTVFENLKPMPFFYYSDTPCVYVDGLESKQVDYVPLRSATCITRCNLGGAVCSKHAEEYCNYLESYNIVTTAGFTFWVYKNFDFYNLWNTFTTLQSLENVIYNLVNVGHYDGRTGELPCAIMNDKVVVKINNVDTVIFKNNTSFPTNIAVELFTKRSIRHHPELKILRNLNIDICWKHVLWDYVKDSLFCSSTYGVCKYTDLKFIENLNILFDGRDTGALEAFRKARNGVFISTEKLSRLSMIKGPQRADLNGVIVDKVGELKVEFWFAMRKDGDDVIFSRTDSLCSSHYWSPQGNLGGNCAGNVIGNDALTRFTIFTQSRVLSSFEPRSDLERDFIDMDDNLFIAKYGLEDYAFDHIVYGSFNHKVIGGLHLLIGLFRRKKKSNLLIQEFLQYDSSIHSYFITDQECGSSKSVCTVIDLLLDDFVSIVKSLNLSCVSKVVNINVDFKDFQFMLWCNDNKIMTFYPKMQATNDWKPGYSMPVLYKYLNVPLERVSLWNYGKPINLPTGCMMNVAKYTQLCQYLNTTTLAVPVNMRVLHLGAGSDKEVAPGSAVLRQWLPSGSILVDNDLNPFVSDSLVTYFGDCMTLPFDCHWDLIISDMYDPLTKNIGDYNVSKDGFFTYICHLIRDKLSLGGSVAIKITEFSWNADLYKLMSCFAFWTVFCTNVNASSSEGFLIGINYLGKSSFEIDGNVMHANYLFWRNSTTWNGGAYSLFDMTKFSLKLAGTAVVNLRPDQLNDLVYSLIERGKLLVRDTRKEIFVGDSLVNTC.

Positions 54 to 174 constitute a CoV Nsp1 globular domain; sequence YDNHVKIDCR…HKWFQFCRLY (121 aa). Positions 192-222 constitute a BetaCoV Nsp1 C-terminal domain; sequence FSVEDAYAEVHAEPKGKYSQKAYALLRQYRG. The 263-residue stretch at 226 to 488 folds into the CoV Nsp2 N-terminal domain; the sequence is VLFVDQYGCD…LITHALYLDY (263 aa). Positions 365, 370, 386, and 389 each coordinate Zn(2+). Residues 365–389 form a C4 region; that stretch reads CFNDNCDFYGWVSGNMMDGFSCPLC. One can recognise a CoV Nsp2 middle domain in the interval 493-681; it reads CGNLEQNHIL…VNKFYTFFKL (189 aa). The region spanning 697–809 is the CoV Nsp2 C-terminal domain; that stretch reads LKTINGLVCI…LDQAWRFPCA (113 aa). The region spanning 811–923 is the Ubiquitin-like 1 domain; sequence RKVNFNEKPV…MYCTFAIEDV (113 aa). Repeat copies occupy residues 945–954, 955–964, 965–974, 975–984, 985–994, 995–1004, 1005–1014, 1015–1024, 1025–1034, 1035–1044, 1045–1054, 1055–1064, 1065–1074, and 1075–1084. The interval 945 to 1084 is 14 X 10 AA tandem repeat of N-[DN]-D-E-D-V-V-T-G-D; the sequence is NDDEDVVTGD…NDDEDVVTGD (140 aa). The segment at 946 to 1064 is disordered; that stretch reads DDEDVVTGDN…NDDEDVVTGD (119 aa). In terms of domain architecture, Peptidase C16 1 spans 1123 to 1373; sequence VFNDVYNDAL…VCFVKGDIIN (251 aa). Residue C1161 is the For PL1-PRO activity of the active site. Zn(2+) is bound by residues C1238, C1241, C1264, and C1266. The segment at 1238–1266 adopts a C4-type 1 zinc-finger fold; it reads CLKCGFSFDLNGLDALFFYGDIVSHVCKC. Catalysis depends on for PL1-PRO activity residues H1312 and D1323. A Macro domain is found at 1351 to 1522; sequence ELPQLYGLCI…IIQKCQITSV (172 aa). A DPUP domain is found at 1578–1649; the sequence is NDVRDYLLSK…TVNQVCVLLA (72 aa). Positions 1649 to 1704 constitute a Ubiquitin-like 2 domain; that stretch reads AKKIDVLLTVDGVNFKSISLTVGEVFGKILGNVFCDGIDVTKLKCSDFYADKILYQ. The Peptidase C16 2 domain occupies 1718-1978; the sequence is SSFGFDQQQL…MVAYNPDLSQ (261 aa). Residue C1757 is the For PL2-PRO activity of the active site. C1835, C1837, C1869, and C1871 together coordinate Zn(2+). A C4-type 2 zinc finger spans residues 1835–1871; that stretch reads CDCGIKQESRVGVDAVMHFGTLAKTDLFNGYKIGCNC. Residues H1914 and D1928 each act as for PL2-PRO activity in the active site. The Nucleic acid-binding domain maps to 1992 to 2093; that stretch reads IKAQFKPFAK…TYFNKPSFKS (102 aa). One can recognise a G2M domain in the interval 2108 to 2257; sequence ESQGNVVTSV…NDKTIFYTTE (150 aa). The next 3 helical transmembrane spans lie at 2226 to 2246, 2287 to 2307, and 2318 to 2338; these read AIEF…LLHF, FLVV…NVIF, and FPIF…LVTI. Residues 2226 to 2463 form an HD1 region; the sequence is AIEFYGFLKW…FVLLRFYIVV (238 aa). The 3Ecto domain maps to 2323-2384; that stretch reads GRIVMWIKAT…AIDFVQYEVD (62 aa). Cystine bridges form between C2339/C2363 and C2354/C2360. A run of 2 helical transmembrane segments spans residues 2401 to 2421 and 2443 to 2463; these read LVIG…LIGL and FIVF…YIVV. Residues 2471-2561 are Y1; that stretch reads GFIRHIVYGC…ELKRPVNPTD (91 aa). The CoV Nsp3 Y domain maps to 2471 to 2838; sequence GFIRHIVYGC…LTTPFSLKGG (368 aa). H2475, C2480, C2485, C2488, C2521, H2524, C2528, and C2531 together coordinate Zn(2+). The interval 2475-2488 is ZF1; sequence HIVYGCNKAGCLFC. The segment at 2521–2531 is ZF2; sequence CVKHQWNCFNC. The Y2 stretch occupies residues 2562-2654; that stretch reads ASHYVVTDIK…LVDKKLITTA (93 aa). Positions 2562 to 2838 are coV-Y; that stretch reads ASHYVVTDIK…LTTPFSLKGG (277 aa). Residues 2655–2737 form a Y3 region; that stretch reads CNGISVTQTM…KSMISAVAAG (83 aa). Positions 2738-2838 are Y4; sequence LEFTDENYNN…LTTPFSLKGG (101 aa). 5 helical membrane passes run 2844-2864, 3119-3139, 3151-3171, 3178-3198, and 3203-3223; these read LLYI…ALLP, ASSI…YYLI, VVVI…VFQV, VYAC…SVIM, and IVMY…AMVI. The interval 2844 to 3223 is HD2; sequence LLYILFFVSL…FCVTYVAMVI (380 aa). Residues 3237–3334 enclose the Nsp4C domain; it reads IGVNVCSDST…TASVSTSFLQ (98 aa). The Peptidase C30 domain occupies 3335–3637; the sequence is SGIVKMVSPT…YQQLAGVKLQ (303 aa). Active-site for 3CL-PRO activity residues include H3375 and C3479. A run of 7 helical transmembrane segments spans residues 3651–3671, 3676–3696, 3701–3721, 3744–3764, 3772–3792, 3800–3820, and 3843–3863; these read ILIS…WTIF, THMI…MLLV, FYLT…NYLV, FTYV…IFIT, IFSL…WYFG, LLFI…SLAI, and LILL…GFFS. The segment at 3651 to 3863 is HD3; that stretch reads ILISTFLFSC…ILSCYWGFFS (213 aa). The RdRp Nsp7 cofactor domain maps to 3925–4013; that stretch reads SKLTDVKCAN…DYVQDSTVLQ (89 aa). The RdRp Nsp8 cofactor domain maps to 4014-4210; it reads ALQSEFVNMA…YNEVANAVMQ (197 aa). Positions 4211–4320 constitute a Nsp9 ssRNA-binding domain; sequence NNELMPHKLK…GTLSSTIRLQ (110 aa). Residues 4321–4458 form the ExoN/MTase coactivator domain; the sequence is AGVATEYAAN…CVGSSVAVQS (138 aa). Residues C4394, C4397, H4403, C4410, C4436, C4439, C4447, and C4449 each coordinate Zn(2+). 2 zinc fingers span residues 4394–4410 and 4436–4449; these read CIYC…DGIC and CQVC…SCSC. Residues 4463 to 4718 form the NiRAN domain; sequence FLNRVRGTSV…DCELFVNDSY (256 aa). Mn(2+) contacts are provided by N4666 and D4675. One can recognise a Nsp12 Interface domain in the interval 4719–4817; it reads RQFDLVQYDF…MNLDVDTHRY (99 aa). Positions 4748, 4754, 4759, 4763, and 4940 each coordinate Zn(2+). The 568-residue stretch at 4818–5385 folds into the Nsp12 RNA-dependent RNA polymerase domain; that stretch reads RLSLKDLLLY…NMYLKSAVMQ (568 aa). Residues 4820–5034 are rdRp Fingers N-ter; sequence SLKDLLLYAA…HQKCLKSIAA (215 aa). The tract at residues 5035–5073 is rdRp Palm N-ter; the sequence is TRGVPVVIGTTKFYGGWDDMLRHLIKDVDNPVLMGWDYP. The RdRp catalytic domain occupies 5065 to 5227; sequence PVLMGWDYPK…CYNSDYASKG (163 aa). The tract at residues 5074 to 5132 is rdRp Fingers C-ter; sequence KCDRAMPNILRIVSSLVLARKHEFCCSHGDRFYRLANECAQVLSEIVMCGGCYYVKPGG. Zn(2+)-binding residues include H5095, C5098, and C5099. A rdRp Palm C-ter region spans residues 5133–5268; the sequence is TSSGDATTAF…TNGPHEFCSQ (136 aa). Residues S5212, D5213, and D5214 contribute to the active site. Residues 5269–5385 are rdRp Thumb; that stretch reads HTMLVKIDGD…NMYLKSAVMQ (117 aa). The CV ZBD domain occupies 5386–5498; it reads SVGACVVCSS…DDFNKIASCK (113 aa). Zn(2+) is bound by residues C5390, C5393, C5401, C5404, C5411, C5414, H5418, H5424, C5435, C5440, C5457, and H5460. The 182-residue stretch at 5641–5822 folds into the (+)RNA virus helicase ATP-binding domain; it reads SVPLVFQNNV…MCCLGPDIFL (182 aa). 5666–5673 provides a ligand contact to ATP; that stretch reads GPPGTGKS. The (+)RNA virus helicase C-terminal domain maps to 5823-5992; the sequence is GNCYRCPKEI…TLPRLHCTTN (170 aa). Residues 6059–6274 form the ExoN domain; sequence LFITKDEAIK…RCLAIYDCFC (216 aa). Residues D6077, E6079, and E6178 contribute to the active site. Zn(2+) is bound by residues C6194, C6197, C6213, H6216, H6244, C6248, and H6251. Residues H6255 and D6260 contribute to the active site. C6266 contacts Zn(2+). Residues 6283–6509 form the N7-MTase domain; sequence YPIISNEVSI…NLWNTFTTLQ (227 aa). Residue 6318 to 6324 participates in S-adenosyl-L-methionine binding; it reads DIGNPKG. Residues 6396–6410 are gpppA-binding; the sequence is CNGGSLYVNKHAFHT. Positions 6434, 6455, 6466, and 6469 each coordinate Zn(2+). Residues 6510–6570 form the Nsp15 N-terminal oligomerization domain; sequence SLENVIYNLV…NIAVELFTKR (61 aa). Residues 6571–6691 enclose the AV-Nsp11N/CoV-Nsp15M domain; the sequence is SIRHHPELKI…FAMRKDGDDV (121 aa). In terms of domain architecture, NendoU spans 6741–6880; sequence EPRSDLERDF…NDNKIMTFYP (140 aa). Catalysis depends on residues H6771, H6786, K6826, K6929, D7013, K7053, and E7086. Residues 6885 to 7179 enclose the Nidovirus-type SAM-dependent 2'-O-MTase domain; the sequence is TNDWKPGYSM…KEIFVGDSLV (295 aa).

It belongs to the coronaviruses polyprotein 1ab family. As to quaternary structure, interacts with host PHB and PHB2. In terms of assembly, interacts with papain-like protease nsp3 and non-structural protein 6. Monomer. Homodimer. Only the homodimer shows catalytic activity. As to quaternary structure, interacts with nsp8 and nsp12 to form the replication-transcription complex (RTC): nsp12, nsp7, two subunits of nsp8, and up to two subunits of nsp13. In terms of assembly, interacts with nsp7, nsp13 and nsp12 to form the replication-transcription complex (RTC): nsp12, nsp7, two subunits of nsp8, and up to two subunits of nsp13. Interacts with nsp12. As to quaternary structure, interacts with proofreading exoribonuclease nsp14 and 2'-O-methyltransferase nsp16; these interactions enhance nsp14 and nsp16 enzymatic activities. In terms of assembly, interacts with nsp7 and nsp8 to form the replication-transcription complex (RTC): nsp12, nsp7, two subunits of nsp8, and up to two subunits of nsp13. Interacts with nsp9. Interacts with nsp8 to form the replication-transcription complex (RTC): nsp12, nsp7, two subunits of nsp8, and up to two subunits of nsp13. Mn(2+) is required as a cofactor. Requires Mg(2+) as cofactor. In terms of processing, specific enzymatic cleavages in vivo by its own proteases yield mature proteins. 3CL-PRO and PL-PRO proteinases are autocatalytically processed.

It localises to the host membrane. It is found in the host cytoplasm. The protein localises to the host perinuclear region. The protein resides in the host endoplasmic reticulum-Golgi intermediate compartment. It carries out the reaction RNA(n) + a ribonucleoside 5'-triphosphate = RNA(n+1) + diphosphate. It catalyses the reaction ATP + H2O = ADP + phosphate + H(+). The enzyme catalyses Thiol-dependent hydrolysis of ester, thioester, amide, peptide and isopeptide bonds formed by the C-terminal Gly of ubiquitin (a 76-residue protein attached to proteins as an intracellular targeting signal).. The catalysed reaction is a 5'-end (N(7)-methyl 5'-triphosphoguanosine)-ribonucleoside in mRNA + S-adenosyl-L-methionine = a 5'-end (N(7)-methyl 5'-triphosphoguanosine)-(2'-O-methyl-ribonucleoside) in mRNA + S-adenosyl-L-homocysteine + H(+). It carries out the reaction uridylyl-uridylyl-ribonucleotide-RNA = a 3'-end uridylyl-2',3'-cyclophospho-uridine-RNA + a 5'-end dephospho-ribonucleoside-RNA. It catalyses the reaction a 5'-end diphospho-ribonucleoside in mRNA + GTP + H(+) = a 5'-end (5'-triphosphoguanosine)-ribonucleoside in mRNA + diphosphate. The enzyme catalyses a 5'-end (5'-triphosphoguanosine)-ribonucleoside in mRNA + S-adenosyl-L-methionine = a 5'-end (N(7)-methyl 5'-triphosphoguanosine)-ribonucleoside in mRNA + S-adenosyl-L-homocysteine. In terms of biological role, the replicase polyprotein of coronaviruses is a multifunctional protein: it contains the activities necessary for the transcription of negative stranded RNA, leader RNA, subgenomic mRNAs and progeny virion RNA as well as proteinases responsible for the cleavage of the polyprotein into functional products. Its function is as follows. Inhibits host translation by interacting with the 40S ribosomal subunit. The nsp1-40S ribosome complex further induces an endonucleolytic cleavage near the 5'UTR of host mRNAs, targeting them for degradation. Viral mRNAs are not susceptible to nsp1-mediated endonucleolytic RNA cleavage thanks to the presence of a 5'-end leader sequence and are therefore protected from degradation. By suppressing host gene expression, nsp1 facilitates efficient viral gene expression in infected cells and evasion from host immune response. May play a role in the modulation of host cell survival signaling pathway by interacting with host PHB and PHB2. Indeed, these two proteins play a role in maintaining the functional integrity of the mitochondria and protecting cells from various stresses. Functionally, responsible for the cleavages located at the N-terminus of the replicase polyprotein. In addition, PL-PRO possesses a deubiquitinating/deISGylating activity and processes both 'Lys-48'- and 'Lys-63'-linked polyubiquitin chains from cellular substrates. Participates together with nsp4 in the assembly of virally-induced cytoplasmic double-membrane vesicles necessary for viral replication. Antagonizes innate immune induction of type I interferon by blocking the phosphorylation, dimerization and subsequent nuclear translocation of host IRF3. Also prevents host NF-kappa-B signaling. In terms of biological role, participates in the assembly of virally-induced cytoplasmic double-membrane vesicles necessary for viral replication. Its function is as follows. Cleaves the C-terminus of replicase polyprotein at 11 sites. Recognizes substrates containing the core sequence [ILMVF]-Q-|-[SGACN]. Also able to bind an ADP-ribose-1''-phosphate (ADRP). Plays a role in the initial induction of autophagosomes from host endoplasmic reticulum. Later, limits the expansion of these phagosomes that are no longer able to deliver viral components to lysosomes. Functionally, forms a hexadecamer with nsp8 (8 subunits of each) that may participate in viral replication by acting as a primase. Alternatively, may synthesize substantially longer products than oligonucleotide primers. In terms of biological role, forms a hexadecamer with nsp7 (8 subunits of each) that may participate in viral replication by acting as a primase. Alternatively, may synthesize substantially longer products than oligonucleotide primers. Its function is as follows. Forms a primer, NSP9-pU, which is utilized by the polymerase for the initiation of RNA chains. Interacts with ribosome signal recognition particle RNA (SRP). Together with NSP8, suppress protein integration into the cell membrane, thereby disrupting host immune defenses. Plays a pivotal role in viral transcription by stimulating both nsp14 3'-5' exoribonuclease and nsp16 2'-O-methyltransferase activities. Therefore plays an essential role in viral mRNAs cap methylation. Functionally, RNA-directed RNA polymerase that catalyzes the transcription of viral genomic and subgenomic RNAs. Acts in complex with nsp7 and nsp8 to transcribe both the minus and positive strands of genomic RNA. The kinase-like NiRAN domain of NSP12 attaches one or more nucleotides to the amino terminus of NSP9, forming a covalent RNA-protein intermediate that serves as transcription/replication primer. Subgenomic RNAs (sgRNAs) are formed by discontinuous transcription: The polymerase has the ability to pause at transcription-regulating sequences (TRS) and jump to the leader TRS, resulting in a major deletion. This creates a series of subgenomic RNAs that are replicated, transcribed and translated. In addition, Nsp12 is a subunit of the viral RNA capping enzyme that catalyzes the RNA guanylyltransferase reaction for genomic and sub-genomic RNAs. Subsequently, the NiRAN domain transfers RNA to GDP, and forms the core cap structure GpppA-RNA. In terms of biological role, multi-functional protein with a zinc-binding domain in N-terminus displaying RNA and DNA duplex-unwinding activities with 5' to 3' polarity. Activity of helicase is dependent on magnesium. Its function is as follows. Plays a role in viral RNA synthesis through two distinct activities. The N7-guanine methyltransferase activity plays a role in the formation of the cap structure GpppA-RNA. The proofreading exoribonuclease reduces the sensitivity of the virus to RNA mutagens during replication. This activity acts on both ssRNA and dsRNA in a 3'-5' direction. Plays a role in viral transcription/replication and prevents the simultaneous activation of host cell dsRNA sensors, such as MDA5/IFIH1, OAS, and PKR. Acts by degrading the 5'-polyuridines generated during replication of the poly(A) region of viral genomic and subgenomic RNAs. Catalyzes a two-step reaction in which a 2'3'-cyclic phosphate (2'3'-cP) is first generated by 2'-O transesterification, which is then hydrolyzed to a 3'-phosphate (3'-P). If not degraded, poly(U) RNA would hybridize with poly(A) RNA tails and activate host dsRNA sensors. Functionally, methyltransferase that mediates mRNA cap 2'-O-ribose methylation to the 5'-cap structure of viral mRNAs. N7-methyl guanosine cap is a prerequisite for binding of nsp16. Therefore plays an essential role in viral mRNAs cap methylation which is essential to evade immune system. The sequence is that of Replicase polyprotein 1ab (rep) from Human coronavirus HKU1 (isolate N1) (HCoV-HKU1).